Reading from the N-terminus, the 301-residue chain is Acidic endochitinase (301 aa).

The signal sequence occupies residues 1–25 (MARTPQSTPLLISLSVLALLQTSYA). Residues 26-301 (GGIAIYWGQN…GYSSSIKSSV (276 aa)) form the GH18 domain. Cystine bridges form between cysteine 45–cysteine 92 and cysteine 75–cysteine 82. Catalysis depends on glutamate 152, which acts as the Proton donor. A disulfide bridge connects residues cysteine 187 and cysteine 216.

The protein belongs to the glycosyl hydrolase 18 family. Chitinase class II subfamily.

The catalysed reaction is Random endo-hydrolysis of N-acetyl-beta-D-glucosaminide (1-&gt;4)-beta-linkages in chitin and chitodextrins.. Defense against chitin containing fungal pathogens. This Vitis vinifera (Grape) protein is Acidic endochitinase (CHIT3).